The sequence spans 255 residues: Undecaprenyl-diphosphatase (255 aa).

The next 6 helical transmembrane spans lie at 1-21 (MDII…FLPI), 75-95 (IIIS…IVYQ), 96-116 (LFTV…FLIV), 174-194 (TEFS…FDIV), 203-223 (GDIS…LITI), and 234-254 (NFVP…MFFV).

Belongs to the UppP family.

Its subcellular location is the cell membrane. The catalysed reaction is di-trans,octa-cis-undecaprenyl diphosphate + H2O = di-trans,octa-cis-undecaprenyl phosphate + phosphate + H(+). In terms of biological role, catalyzes the dephosphorylation of undecaprenyl diphosphate (UPP). This Methanococcus aeolicus (strain ATCC BAA-1280 / DSM 17508 / OCM 812 / Nankai-3) protein is Undecaprenyl-diphosphatase.